The primary structure comprises 200 residues: Large ribosomal subunit protein uL4 (200 aa).

A disordered region spans residues 42-65 (TRAQKTRSEVSGGGAKPWRQKGTG).

Belongs to the universal ribosomal protein uL4 family. Part of the 50S ribosomal subunit.

In terms of biological role, one of the primary rRNA binding proteins, this protein initially binds near the 5'-end of the 23S rRNA. It is important during the early stages of 50S assembly. It makes multiple contacts with different domains of the 23S rRNA in the assembled 50S subunit and ribosome. Forms part of the polypeptide exit tunnel. This Vibrio vulnificus (strain CMCP6) protein is Large ribosomal subunit protein uL4.